The chain runs to 34 residues: MSDIN-like toxin proprotein 2 (34 aa).

Positions 1-10 are excised as a propeptide; that stretch reads MSDINTARLP. The cyclopeptide (Phe-Pro) cross-link spans 11–20; the sequence is FYQFPDFKYP. The propeptide occupies 21-34; it reads CVGDDIEMVLARGE.

This sequence belongs to the MSDIN fungal toxin family. In terms of processing, processed by the macrocyclase-peptidase enzyme POPB to yield a toxic cyclic decapeptide. POPB first removes 10 residues from the N-terminus. Conformational trapping of the remaining peptide forces the enzyme to release this intermediate rather than proceed to macrocyclization. The enzyme rebinds the remaining peptide in a different conformation and catalyzes macrocyclization of the N-terminal 10 residues.

In terms of biological role, probable toxin that belongs to the MSDIN-like toxin family responsible for a large number of food poisoning cases and deaths. The protein is MSDIN-like toxin proprotein 2 of Amanita bisporigera (Destroying angel).